Reading from the N-terminus, the 89-residue chain is Protein S100-A8 (89 aa).

Alanine 2 is subject to N-acetylalanine. 2 EF-hand domains span residues 13–48 (IEVY…FVQN) and 46–81 (VQNK…VGVA). Residues histidine 17 and histidine 27 each coordinate Zn(2+). A Ca(2+)-binding site is contributed by aspartate 33. Position 42 is an S-nitrosocysteine (cysteine 42). Aspartate 59, asparagine 61, aspartate 63, and glutamate 70 together coordinate Ca(2+). Residue histidine 83 coordinates Zn(2+).

It belongs to the S-100 family. In terms of assembly, homodimer. Preferentially exists as a heterodimer or heterotetramer with S100A9 known as calprotectin (S100A8/A9). S100A8 interacts with AGER, ATP2A2 and with the heterodimeric complex formed by TLR4 and LY96. Calprotectin (S100A8/9) interacts with CEACAM3 and tubulin filaments in a calcium-dependent manner. Heterotetrameric calprotectin (S100A8/A9) interacts with ANXA6 and associates with tubulin filaments in activated monocytes. S100A8 and calprotectin (S100A8/9) interact with NCF2/P67PHOX, RAC1 and RAC2. Calprotectin (S100A8/9) interacts with CYBA and CYBB. Calprotectin (S100A8/9) interacts with NOS2 to form the iNOS-S100A8/A9 transnitrosylase complex. Calprotectin (S100A8/9) interacts with CD69.

The protein localises to the secreted. Its subcellular location is the cytoplasm. It localises to the cytoskeleton. The protein resides in the cell membrane. In terms of biological role, S100A8 is a calcium- and zinc-binding protein which plays a prominent role in the regulation of inflammatory processes and immune response. It can induce neutrophil chemotaxis and adhesion. Predominantly found as calprotectin (S100A8/A9) which has a wide plethora of intra- and extracellular functions. The intracellular functions include: facilitating leukocyte arachidonic acid trafficking and metabolism, modulation of the tubulin-dependent cytoskeleton during migration of phagocytes and activation of the neutrophilic NADPH-oxidase. Also participates in regulatory T-cell differentiation together with CD69. Activates NADPH-oxidase by facilitating the enzyme complex assembly at the cell membrane, transferring arachidonic acid, an essential cofactor, to the enzyme complex and S100A8 contributes to the enzyme assembly by directly binding to NCF2/P67PHOX. The extracellular functions involve pro-inflammatory, antimicrobial, oxidant-scavenging and apoptosis-inducing activities. Its pro-inflammatory activity includes recruitment of leukocytes, promotion of cytokine and chemokine production, and regulation of leukocyte adhesion and migration. Acts as an alarmin or a danger associated molecular pattern (DAMP) molecule and stimulates innate immune cells via binding to pattern recognition receptors such as Toll-like receptor 4 (TLR4) and receptor for advanced glycation endproducts (AGER). Binding to TLR4 and AGER activates the MAP-kinase and NF-kappa-B signaling pathways resulting in the amplification of the pro-inflammatory cascade. Has antimicrobial activity towards bacteria and fungi and exerts its antimicrobial activity probably via chelation of Zn(2+) which is essential for microbial growth. Can induce cell death via autophagy and apoptosis and this occurs through the cross-talk of mitochondria and lysosomes via reactive oxygen species (ROS) and the process involves BNIP3. Can regulate neutrophil number and apoptosis by an anti-apoptotic effect; regulates cell survival via ITGAM/ITGB and TLR4 and a signaling mechanism involving MEK-ERK. Its role as an oxidant scavenger has a protective role in preventing exaggerated tissue damage by scavenging oxidants. The iNOS-S100A8/A9 transnitrosylase complex is proposed to direct selective inflammatory stimulus-dependent S-nitrosylation of multiple targets such as GAPDH, ANXA5, EZR, MSN and VIM by recognizing a [IL]-x-C-x-x-[DE] motif; S100A8 seems to contribute to S-nitrosylation site selectivity. The chain is Protein S100-A8 (S100a8) from Rattus norvegicus (Rat).